Reading from the N-terminus, the 378-residue chain is Chorismate synthase (378 aa).

Position 49 (Arg49) interacts with NADP(+). Residues 126–128 (RAS), Gly287, 302–306 (KPTAT), and Arg328 contribute to the FMN site.

This sequence belongs to the chorismate synthase family. As to quaternary structure, homotetramer. It depends on FMNH2 as a cofactor.

The enzyme catalyses 5-O-(1-carboxyvinyl)-3-phosphoshikimate = chorismate + phosphate. The protein operates within metabolic intermediate biosynthesis; chorismate biosynthesis; chorismate from D-erythrose 4-phosphate and phosphoenolpyruvate: step 7/7. In terms of biological role, catalyzes the anti-1,4-elimination of the C-3 phosphate and the C-6 proR hydrogen from 5-enolpyruvylshikimate-3-phosphate (EPSP) to yield chorismate, which is the branch point compound that serves as the starting substrate for the three terminal pathways of aromatic amino acid biosynthesis. This reaction introduces a second double bond into the aromatic ring system. In Synechococcus sp. (strain JA-3-3Ab) (Cyanobacteria bacterium Yellowstone A-Prime), this protein is Chorismate synthase.